The following is a 117-amino-acid chain: Large ribosomal subunit protein uL18 (117 aa).

This sequence belongs to the universal ribosomal protein uL18 family. Part of the 50S ribosomal subunit; part of the 5S rRNA/L5/L18/L25 subcomplex. Contacts the 5S and 23S rRNAs.

Functionally, this is one of the proteins that bind and probably mediate the attachment of the 5S RNA into the large ribosomal subunit, where it forms part of the central protuberance. This Francisella tularensis subsp. novicida (strain U112) protein is Large ribosomal subunit protein uL18.